A 930-amino-acid polypeptide reads, in one-letter code: Serine/threonine-protein kinase PknD (930 aa).

One can recognise a Protein kinase domain in the interval 4-291 (YDIIRMIGKG…ALKADIEQHL (288 aa)). Residues 10–18 (IGKGGMGEV) and lysine 33 contribute to the ATP site. Aspartate 138 (proton acceptor) is an active-site residue.

This sequence belongs to the protein kinase superfamily. Ser/Thr protein kinase family. Post-translationally, autophosphorylated on serine and threonine residues.

It carries out the reaction L-seryl-[protein] + ATP = O-phospho-L-seryl-[protein] + ADP + H(+). The enzyme catalyses L-threonyl-[protein] + ATP = O-phospho-L-threonyl-[protein] + ADP + H(+). Functionally, together with the serine/threonine kinase Pkn1, may play a role in the specific interactions with host proteins during intracellular growth. This is Serine/threonine-protein kinase PknD from Chlamydia caviae (strain ATCC VR-813 / DSM 19441 / 03DC25 / GPIC) (Chlamydophila caviae).